Here is an 805-residue protein sequence, read N- to C-terminus: Nitrite reductase [NAD(P)H] (805 aa).

43-79 (YNRILLSKVLQGDTDIKDITLNDWDWYEENNIQLYTN) is an FAD binding site. Position 193–223 (193–223 (LQNELEKQGMTFLLEKQTEEIVGDDRVEGLR)) interacts with NADP(+). 4 residues coordinate [2Fe-2S] cluster: cysteine 418, cysteine 420, cysteine 453, and cysteine 456. [4Fe-4S] cluster contacts are provided by cysteine 635, cysteine 641, cysteine 675, and cysteine 679. Residue cysteine 679 participates in siroheme binding.

Belongs to the nitrite and sulfite reductase 4Fe-4S domain family. Homodimer. It depends on siroheme as a cofactor. [2Fe-2S] cluster is required as a cofactor. The cofactor is [4Fe-4S] cluster. FAD serves as cofactor.

It catalyses the reaction NH4(+) + 3 NADP(+) + 2 H2O = nitrite + 3 NADPH + 5 H(+). It carries out the reaction NH4(+) + 3 NAD(+) + 2 H2O = nitrite + 3 NADH + 5 H(+). The protein operates within nitrogen metabolism; nitrate reduction (assimilation). Required for nitrite assimilation. The polypeptide is Nitrite reductase [NAD(P)H] (nasD) (Bacillus subtilis (strain 168)).